Here is a 136-residue protein sequence, read N- to C-terminus: MPGVTVKDVNQQEFVRALAAFLKKSGKLKVPEWVDTVKLAXHKELAPYDENWFYTRAASTARHLYLRGGAGVGSMTKIYGGRQRNGVMPSHFSRGSKSVARRVLQALEGLKMVEKDQDGGRKLTPQGQRDLDRIAG.

Lys-23 is modified (N6-acetyllysine). Residue Arg-67 is modified to Omega-N-methylarginine. 2 positions are modified to N6-acetyllysine: Lys-111 and Lys-115. The interval 116–136 is disordered; the sequence is DQDGGRKLTPQGQRDLDRIAG.

It belongs to the eukaryotic ribosomal protein eS19 family. Component of the small ribosomal subunit. Part of the small subunit (SSU) processome, composed of more than 70 proteins and the RNA chaperone small nucleolar RNA (snoRNA) U3. Interacts with RPS19BP1; the interaction is direct and mediates the integration of RPS19 in state post-A1. Interacts with RPS19BP1.

It localises to the cytoplasm. The protein resides in the nucleus. It is found in the nucleolus. Its function is as follows. Component of the small ribosomal subunit. The ribosome is a large ribonucleoprotein complex responsible for the synthesis of proteins in the cell. Required for pre-rRNA processing and maturation of 40S ribosomal subunits. Part of the small subunit (SSU) processome, first precursor of the small eukaryotic ribosomal subunit. During the assembly of the SSU processome in the nucleolus, many ribosome biogenesis factors, an RNA chaperone and ribosomal proteins associate with the nascent pre-rRNA and work in concert to generate RNA folding, modifications, rearrangements and cleavage as well as targeted degradation of pre-ribosomal RNA by the RNA exosome. The chain is Small ribosomal subunit protein eS19 (RPS19) from Sus scrofa (Pig).